Consider the following 390-residue polypeptide: 3-ketoacyl-CoA thiolase (390 aa).

Cys-95 functions as the Acyl-thioester intermediate in the catalytic mechanism. Active-site proton acceptor residues include His-346 and Cys-376.

This sequence belongs to the thiolase-like superfamily. Thiolase family. As to quaternary structure, heterotetramer of two alpha chains (FadB) and two beta chains (FadA).

The protein localises to the cytoplasm. It catalyses the reaction an acyl-CoA + acetyl-CoA = a 3-oxoacyl-CoA + CoA. It functions in the pathway lipid metabolism; fatty acid beta-oxidation. Its function is as follows. Catalyzes the final step of fatty acid oxidation in which acetyl-CoA is released and the CoA ester of a fatty acid two carbons shorter is formed. The protein is 3-ketoacyl-CoA thiolase of Acinetobacter baumannii (strain AB307-0294).